A 197-amino-acid polypeptide reads, in one-letter code: Thymidine kinase (197 aa).

ATP is bound by residues 9-16 (AAMNAGKS) and 83-86 (DESQ). E84 acts as the Proton acceptor in catalysis. The Zn(2+) site is built by C141, C143, C178, and C181.

Belongs to the thymidine kinase family. Homotetramer.

The protein localises to the cytoplasm. The catalysed reaction is thymidine + ATP = dTMP + ADP + H(+). This chain is Thymidine kinase, found in Albidiferax ferrireducens (strain ATCC BAA-621 / DSM 15236 / T118) (Rhodoferax ferrireducens).